The primary structure comprises 83 residues: Apolipoprotein C-I, acidic form (83 aa).

An N-terminal signal peptide occupies residues 1-26; sequence MRLFLSLPVLVVVLSMVLEGPAPAQG.

Belongs to the apolipoprotein C1 family.

It is found in the secreted. Its function is as follows. Inhibitor of lipoprotein binding to the low density lipoprotein (LDL) receptor, LDL receptor-related protein, and very low density lipoprotein (VLDL) receptor. Associates with high density lipoproteins (HDL) and the triacylglycerol-rich lipoproteins in the plasma and makes up about 10% of the protein of the VLDL and 2% of that of HDL. Appears to interfere directly with fatty acid uptake and is also the major plasma inhibitor of cholesteryl ester transfer protein (CETP). Binds free fatty acids and reduces their intracellular esterification. Modulates the interaction of APOE with beta-migrating VLDL and inhibits binding of beta-VLDL to the LDL receptor-related protein. The sequence is that of Apolipoprotein C-I, acidic form (APOC1A) from Pongo abelii (Sumatran orangutan).